The chain runs to 180 residues: MILNDRKIRELIESKELLIDPLDAVQIQPSSVDLRLGNDFLIYPEDIEILDVRNPDLHNQLKKVVADDEGFIIQPKQFILATTREYIKLPDYLTAFVEGRSSLGRLGLFIENAGWVDAGFEGNITLEFYNANSRPLKIYPGMRICQLVFAKMEEPAENPYRGKYQGQRGTTASRIFLDKD.

DCTP contacts are provided by residues 100-105 (RSSLGR), D117, 125-127 (TLE), Q146, Y160, and Q167. E127 functions as the Proton donor/acceptor in the catalytic mechanism.

This sequence belongs to the dCTP deaminase family. As to quaternary structure, homotrimer.

It catalyses the reaction dCTP + 2 H2O = dUMP + NH4(+) + diphosphate. The protein operates within pyrimidine metabolism; dUMP biosynthesis; dUMP from dCTP: step 1/1. In terms of biological role, bifunctional enzyme that catalyzes both the deamination of dCTP to dUTP and the hydrolysis of dUTP to dUMP without releasing the toxic dUTP intermediate. The chain is dCTP deaminase, dUMP-forming from Persephonella marina (strain DSM 14350 / EX-H1).